The sequence spans 32 residues: uncharacterized protein (32 aa).

A helical membrane pass occupies residues 3–23; the sequence is IGIIFPVVIFITAVVFLAWFF.

The protein localises to the cell inner membrane. This is an uncharacterized protein from Escherichia coli (strain K12).